The sequence spans 248 residues: Triosephosphate isomerase (248 aa).

9–11 is a binding site for substrate; the sequence is NWK. H94 acts as the Electrophile in catalysis. Residue E166 is the Proton acceptor of the active site. Substrate is bound by residues G172, S212, and 233 to 234; that span reads GG.

This sequence belongs to the triosephosphate isomerase family. Homodimer.

Its subcellular location is the cytoplasm. The catalysed reaction is D-glyceraldehyde 3-phosphate = dihydroxyacetone phosphate. It functions in the pathway carbohydrate biosynthesis; gluconeogenesis. It participates in carbohydrate degradation; glycolysis; D-glyceraldehyde 3-phosphate from glycerone phosphate: step 1/1. Involved in the gluconeogenesis. Catalyzes stereospecifically the conversion of dihydroxyacetone phosphate (DHAP) to D-glyceraldehyde-3-phosphate (G3P). This Alkaliphilus oremlandii (strain OhILAs) (Clostridium oremlandii (strain OhILAs)) protein is Triosephosphate isomerase.